We begin with the raw amino-acid sequence, 316 residues long: MKSENQIHTALYLAFQRSQWAELRESVPLTLNEPELANLRGINEKLSLTEVTDIYLPLSRLLNLIVGAKQKRGLVLNEFLGRKPPKRPYIISIAGSVAVGKSTTARILQALLSQWPEHPRVDLVTTDGFLYPLAELKRRGLLQRKGFPESYDMKLLVEFISNIKAGAPYVEAPLYSHVSYDRITDDHQAIESPDILIIEGLNVLQTSQDAAVGTQQPFVSDFVDFSIYVDAQEQLLKKWYIDRFLQFRGGAFSDENSYFHHYSKLNDKEAKITAANIWDSINGPNLKLNIEPTRDRAHLILQKGDDHLMSQVLLRK.

95–102 (GSVAVGKS) contacts ATP.

The protein belongs to the prokaryotic pantothenate kinase family.

The protein resides in the cytoplasm. It carries out the reaction (R)-pantothenate + ATP = (R)-4'-phosphopantothenate + ADP + H(+). It participates in cofactor biosynthesis; coenzyme A biosynthesis; CoA from (R)-pantothenate: step 1/5. In Shewanella woodyi (strain ATCC 51908 / MS32), this protein is Pantothenate kinase.